Here is a 155-residue protein sequence, read N- to C-terminus: Putative pre-16S rRNA nuclease (155 aa).

The protein belongs to the YqgF nuclease family.

Its subcellular location is the cytoplasm. Functionally, could be a nuclease involved in processing of the 5'-end of pre-16S rRNA. This chain is Putative pre-16S rRNA nuclease, found in Xanthomonas campestris pv. campestris (strain 8004).